We begin with the raw amino-acid sequence, 842 residues long: Elongation factor 2 (842 aa).

The tr-type G domain maps to 17 to 346; that stretch reads TNVRNMSVIA…MIVMHLPSPV (330 aa). GTP contacts are provided by residues 26-33, 158-161, and 213-215; these read AHVDHGKS, NKVD, and SGL. H699 carries the diphthamide modification.

It belongs to the TRAFAC class translation factor GTPase superfamily. Classic translation factor GTPase family. EF-G/EF-2 subfamily.

Its subcellular location is the cytoplasm. It carries out the reaction GTP + H2O = GDP + phosphate + H(+). Functionally, catalyzes the GTP-dependent ribosomal translocation step during translation elongation. During this step, the ribosome changes from the pre-translocational (PRE) to the post-translocational (POST) state as the newly formed A-site-bound peptidyl-tRNA and P-site-bound deacylated tRNA move to the P and E sites, respectively. Catalyzes the coordinated movement of the two tRNA molecules, the mRNA and conformational changes in the ribosome. The chain is Elongation factor 2 (EFT1) from Candida glabrata (strain ATCC 2001 / BCRC 20586 / JCM 3761 / NBRC 0622 / NRRL Y-65 / CBS 138) (Yeast).